We begin with the raw amino-acid sequence, 637 residues long: tRNA uridine 5-carboxymethylaminomethyl modification enzyme MnmG (637 aa).

FAD contacts are provided by residues 15 to 20 (GAGHAG), isoleucine 127, and serine 182. Residue 276–290 (GPRYCPSIEDKIVRF) participates in NAD(+) binding. Residue glutamine 373 participates in FAD binding.

Belongs to the MnmG family. In terms of assembly, homodimer. Heterotetramer of two MnmE and two MnmG subunits. Requires FAD as cofactor.

Its subcellular location is the cytoplasm. Its function is as follows. NAD-binding protein involved in the addition of a carboxymethylaminomethyl (cmnm) group at the wobble position (U34) of certain tRNAs, forming tRNA-cmnm(5)s(2)U34. The chain is tRNA uridine 5-carboxymethylaminomethyl modification enzyme MnmG from Streptococcus pneumoniae (strain Hungary19A-6).